A 144-amino-acid chain; its full sequence is 3-hydroxyacyl-[acyl-carrier-protein] dehydratase FabZ (144 aa).

His-51 is a catalytic residue.

It belongs to the thioester dehydratase family. FabZ subfamily.

It localises to the cytoplasm. It catalyses the reaction a (3R)-hydroxyacyl-[ACP] = a (2E)-enoyl-[ACP] + H2O. In terms of biological role, involved in unsaturated fatty acids biosynthesis. Catalyzes the dehydration of short chain beta-hydroxyacyl-ACPs and long chain saturated and unsaturated beta-hydroxyacyl-ACPs. The chain is 3-hydroxyacyl-[acyl-carrier-protein] dehydratase FabZ from Clostridium botulinum (strain Langeland / NCTC 10281 / Type F).